A 197-amino-acid polypeptide reads, in one-letter code: Thymidine kinase (197 aa).

Residues 9 to 16 (SAMDAGKT) and 87 to 90 (DEIH) contribute to the ATP site. The active-site Proton acceptor is E88. C145, C147, C187, and H190 together coordinate Zn(2+).

It belongs to the thymidine kinase family. Homotetramer.

It is found in the cytoplasm. The catalysed reaction is thymidine + ATP = dTMP + ADP + H(+). This is Thymidine kinase from Francisella tularensis subsp. holarctica (strain LVS).